The following is an 88-amino-acid chain: Large ribosomal subunit protein bL27 (88 aa).

Positions 1 to 24 (MAHKKAGGSSRNGRDSAGQRRGVK) are disordered.

It belongs to the bacterial ribosomal protein bL27 family.

This Syntrophobacter fumaroxidans (strain DSM 10017 / MPOB) protein is Large ribosomal subunit protein bL27.